The following is a 383-amino-acid chain: UDP-N-acetylglucosamine--N-acetylmuramyl-(pentapeptide) pyrophosphoryl-undecaprenol N-acetylglucosamine transferase (383 aa).

Residues 11-13 (TGG), Asn125, Arg166, Ser191, Ile246, and Gln291 each bind UDP-N-acetyl-alpha-D-glucosamine. The interval 364–383 (PNGRERTPIEAEKKAPRSNS) is disordered. Basic and acidic residues predominate over residues 366–383 (GRERTPIEAEKKAPRSNS).

This sequence belongs to the glycosyltransferase 28 family. MurG subfamily.

Its subcellular location is the cell inner membrane. It carries out the reaction di-trans,octa-cis-undecaprenyl diphospho-N-acetyl-alpha-D-muramoyl-L-alanyl-D-glutamyl-meso-2,6-diaminopimeloyl-D-alanyl-D-alanine + UDP-N-acetyl-alpha-D-glucosamine = di-trans,octa-cis-undecaprenyl diphospho-[N-acetyl-alpha-D-glucosaminyl-(1-&gt;4)]-N-acetyl-alpha-D-muramoyl-L-alanyl-D-glutamyl-meso-2,6-diaminopimeloyl-D-alanyl-D-alanine + UDP + H(+). It functions in the pathway cell wall biogenesis; peptidoglycan biosynthesis. Its function is as follows. Cell wall formation. Catalyzes the transfer of a GlcNAc subunit on undecaprenyl-pyrophosphoryl-MurNAc-pentapeptide (lipid intermediate I) to form undecaprenyl-pyrophosphoryl-MurNAc-(pentapeptide)GlcNAc (lipid intermediate II). The sequence is that of UDP-N-acetylglucosamine--N-acetylmuramyl-(pentapeptide) pyrophosphoryl-undecaprenol N-acetylglucosamine transferase from Myxococcus xanthus (strain DK1622).